The primary structure comprises 106 residues: 3-oxoacyl-[acyl-carrier-protein] reductase (106 aa).

This sequence belongs to the short-chain dehydrogenases/reductases (SDR) family. As to quaternary structure, homotetramer. As to expression, mesocarp.

The protein localises to the plastid. Its subcellular location is the chloroplast. The enzyme catalyses a (3R)-hydroxyacyl-[ACP] + NADP(+) = a 3-oxoacyl-[ACP] + NADPH + H(+). Its pathway is lipid metabolism; fatty acid biosynthesis. This Persea americana (Avocado) protein is 3-oxoacyl-[acyl-carrier-protein] reductase.